We begin with the raw amino-acid sequence, 167 residues long: Probable chorismate pyruvate-lyase (167 aa).

3 residues coordinate substrate: Arg71, Ile110, and Glu150.

This sequence belongs to the UbiC family.

It localises to the cytoplasm. The catalysed reaction is chorismate = 4-hydroxybenzoate + pyruvate. It functions in the pathway cofactor biosynthesis; ubiquinone biosynthesis. Removes the pyruvyl group from chorismate, with concomitant aromatization of the ring, to provide 4-hydroxybenzoate (4HB) for the ubiquinone pathway. This is Probable chorismate pyruvate-lyase from Acinetobacter baylyi (strain ATCC 33305 / BD413 / ADP1).